A 329-amino-acid polypeptide reads, in one-letter code: MNSETLPAELPATLTIASRESRLAMWQAEHVRDALRKLYPACDVKILGMTTRGDQILDRTLSKVGGKGLFVKELESALADGRADLAVHSLKDVPMALPEGFALAAVMSREDPRDAFVSNDYASLDALPAGAVVGTSSLRREAMLRARHPRLDVRPLRGNLDTRLAKLDRGDYAAIILAAAGLKRLGLAARIRALLDVDDSLPAAGQGALGIEIAARRADVAAWLAPLHDHASALAVEAERAVSRALGGSCEVPLAAHAVWRGGELHLTGSVSTTDGARVLAAHAHARAATAADALALGRRVSDALERQGARAIVDALVAASAQAQKGGA.

Cys-250 is subject to S-(dipyrrolylmethanemethyl)cysteine.

The protein belongs to the HMBS family. In terms of assembly, monomer. The cofactor is dipyrromethane.

It carries out the reaction 4 porphobilinogen + H2O = hydroxymethylbilane + 4 NH4(+). It functions in the pathway porphyrin-containing compound metabolism; protoporphyrin-IX biosynthesis; coproporphyrinogen-III from 5-aminolevulinate: step 2/4. Its function is as follows. Tetrapolymerization of the monopyrrole PBG into the hydroxymethylbilane pre-uroporphyrinogen in several discrete steps. This is Porphobilinogen deaminase from Burkholderia mallei (strain NCTC 10247).